We begin with the raw amino-acid sequence, 681 residues long: Methionine--tRNA ligase (681 aa).

A 'HIGH' region motif is present at residues 15-25 (PYANGPIHLGH). Positions 146, 149, 159, and 162 each coordinate Zn(2+). Positions 332 to 336 (KMSKS) match the 'KMSKS' region motif. Lys335 contributes to the ATP binding site. The disordered stretch occupies residues 547 to 569 (DNMAQAPKDNGKAKKDKKEAKSE). Over residues 555–569 (DNGKAKKDKKEAKSE) the composition is skewed to basic and acidic residues. The region spanning 580 to 681 (DFAKIDLRIA…SGAQPGMQVK (102 aa)) is the tRNA-binding domain.

This sequence belongs to the class-I aminoacyl-tRNA synthetase family. MetG type 1 subfamily. As to quaternary structure, homodimer. Zn(2+) serves as cofactor.

It localises to the cytoplasm. The catalysed reaction is tRNA(Met) + L-methionine + ATP = L-methionyl-tRNA(Met) + AMP + diphosphate. Functionally, is required not only for elongation of protein synthesis but also for the initiation of all mRNA translation through initiator tRNA(fMet) aminoacylation. The polypeptide is Methionine--tRNA ligase (Hahella chejuensis (strain KCTC 2396)).